We begin with the raw amino-acid sequence, 285 residues long: MAERGGERGVERGGERGDFGRGFGGRGGRGDRGGRGRGGRGGRRGGRASEEEKWVPVTKLGRLVAAGHIKQIEQIYLHSLPVKEYQIIDMLIGPTLKDEVMKIMPVQKQTRAGQRTRFKAFVVVGDGNGHVGLGVKCSKEVATAIRGAIILAKLSVVPVRRGYWGNKIGKPHTVPCKVTGKCGSVTVRMVPAPRGSGIVAARVPKKVLQFAGIDDVFTSSRGSTKTLGNFVKATFDCLQKTYGFLTPEFWKETRFSRSPYQEHTDFLASKALSTSKPDPVVEDQA.

Positions 1–19 are enriched in basic and acidic residues; it reads MAERGGERGVERGGERGDF. Residues 1–51 are disordered; sequence MAERGGERGVERGGERGDFGRGFGGRGGRGDRGGRGRGGRGGRRGGRASEE. Positions 35-46 are enriched in basic residues; the sequence is RGRGGRGGRRGG. The S5 DRBM domain occupies 96–159; sequence LKDEVMKIMP…ILAKLSVVPV (64 aa).

The protein belongs to the universal ribosomal protein uS5 family. Interacts with MBD6.

Component of the ribosome, a large ribonucleoprotein complex responsible for the synthesis of proteins in the cell. The small ribosomal subunit (SSU) binds messenger RNAs (mRNAs) and translates the encoded message by selecting cognate aminoacyl-transfer RNA (tRNA) molecules. The large subunit (LSU) contains the ribosomal catalytic site termed the peptidyl transferase center (PTC), which catalyzes the formation of peptide bonds, thereby polymerizing the amino acids delivered by tRNAs into a polypeptide chain. The nascent polypeptides leave the ribosome through a tunnel in the LSU and interact with protein factors that function in enzymatic processing, targeting, and the membrane insertion of nascent chains at the exit of the ribosomal tunnel. Plays a role in the assembly and function of the 40S ribosomal subunit. Mutations in this protein affects the control of translational fidelity. Involved in nucleolar processing of pre-18S ribosomal RNA and ribosome assembly. Also involved in RNA-directed DNA methylation (RdDM). This chain is Small ribosomal subunit protein uS5x, found in Arabidopsis thaliana (Mouse-ear cress).